The following is a 428-amino-acid chain: Cysteine synthase 2 (428 aa).

A helical membrane pass occupies residues 7-27; that stretch reads IYIGSAFVAGVVLTIAFKDLF. The residue at position 106 (Lys-106) is an N6-(pyridoxal phosphate)lysine. Pyridoxal 5'-phosphate contacts are provided by residues 260–264 and Ser-367; that span reads GTGGT.

This sequence belongs to the cysteine synthase/cystathionine beta-synthase family. Pyridoxal 5'-phosphate serves as cofactor.

Its subcellular location is the mitochondrion outer membrane. The enzyme catalyses O-acetyl-L-serine + hydrogen sulfide = L-cysteine + acetate. Putative cysteine synthase that catalyzes the conversion of O-acetyl-L-serine (OAS) into cysteine, the last step in the cysteine biosynthesis pathway. However, in contrast to cysteine synthase cysB, this CS-like protein seems not to function in cysteine biosynthesis. The chain is Cysteine synthase 2 from Emericella nidulans (strain FGSC A4 / ATCC 38163 / CBS 112.46 / NRRL 194 / M139) (Aspergillus nidulans).